We begin with the raw amino-acid sequence, 350 residues long: Ribosomal RNA large subunit methyltransferase M (350 aa).

Residues 217-220 (APGG), aspartate 236, aspartate 256, and aspartate 272 each bind S-adenosyl-L-methionine. Lysine 301 acts as the Proton acceptor in catalysis.

The protein belongs to the class I-like SAM-binding methyltransferase superfamily. RNA methyltransferase RlmE family. RlmM subfamily. Monomer.

The protein localises to the cytoplasm. The catalysed reaction is cytidine(2498) in 23S rRNA + S-adenosyl-L-methionine = 2'-O-methylcytidine(2498) in 23S rRNA + S-adenosyl-L-homocysteine + H(+). In terms of biological role, catalyzes the 2'-O-methylation at nucleotide C2498 in 23S rRNA. This chain is Ribosomal RNA large subunit methyltransferase M, found in Cellvibrio japonicus (strain Ueda107) (Pseudomonas fluorescens subsp. cellulosa).